The chain runs to 215 residues: MAGEKAQKKGKEKWKEKTWYTVESPPYLGSKEVTVALGEDPESMVNRIVEVPISDLTGNFKKSNEKALFRITGCEGTKCKTIFIGHYIGDDYIRRLVRRRKERIDIIEDVKTSDGSIITVKIVVVSDGKLTNTKKSEIRKALTSFIVSKGSQLSYADFVRYLIGDDSYNDMVEATKNIYPLRKIEIRKSELVSLSGMQEPQKNEPAPGGEAIAQN.

The segment at 195 to 215 (SGMQEPQKNEPAPGGEAIAQN) is disordered.

Belongs to the eukaryotic ribosomal protein eS1 family.

The chain is Small ribosomal subunit protein eS1 from Thermoplasma acidophilum (strain ATCC 25905 / DSM 1728 / JCM 9062 / NBRC 15155 / AMRC-C165).